The chain runs to 109 residues: ATP synthase subunit c (109 aa).

Helical transmembrane passes span 42–62 (YIGT…QGFS) and 88–108 (LALA…IIFV).

Belongs to the ATPase C chain family. In terms of assembly, F-type ATPases have 2 components, F(1) - the catalytic core - and F(0) - the membrane proton channel. F(1) has five subunits: alpha(3), beta(3), gamma(1), delta(1), epsilon(1). F(0) has three main subunits: a(1), b(2) and c(10-14). The alpha and beta chains form an alternating ring which encloses part of the gamma chain. F(1) is attached to F(0) by a central stalk formed by the gamma and epsilon chains, while a peripheral stalk is formed by the delta and b chains.

The protein localises to the cell membrane. In terms of biological role, f(1)F(0) ATP synthase produces ATP from ADP in the presence of a proton or sodium gradient. F-type ATPases consist of two structural domains, F(1) containing the extramembraneous catalytic core and F(0) containing the membrane proton channel, linked together by a central stalk and a peripheral stalk. During catalysis, ATP synthesis in the catalytic domain of F(1) is coupled via a rotary mechanism of the central stalk subunits to proton translocation. Its function is as follows. Key component of the F(0) channel; it plays a direct role in translocation across the membrane. A homomeric c-ring of between 10-14 subunits forms the central stalk rotor element with the F(1) delta and epsilon subunits. The protein is ATP synthase subunit c of Ureaplasma urealyticum serovar 10 (strain ATCC 33699 / Western).